The following is a 1649-amino-acid chain: Cortactin-binding protein 2 (1649 aa).

A disordered region spans residues 1–27 (MATDSASCEPDLSRAPGDAEGATAEAA). The segment covering 15–25 (APGDAEGATAE) has biased composition (low complexity). The stretch at 118–275 (RKMQERMSAQ…EQMKKGNDGK (158 aa)) forms a coiled coil. Disordered regions lie at residues 322–439 (PLSV…PGLN), 451–476 (GNANDPDQNGNNTQSPPSRDVSPTSR), and 492–604 (ALSR…LPPK). Over residues 330–342 (STGSPLVSTNTKG) the composition is skewed to polar residues. Low complexity predominate over residues 395–416 (STPSTPSGTAPAAAQTLGAAPQ). Positions 492–503 (ALSRFTSPQAGA) are enriched in polar residues. Asymmetric dimethylarginine is present on Arg-495. ANK repeat units follow at residues 699-729 (GRPTLLQQAAAQGNVTLLSMLLNEEGLDINY), 733-762 (DSHSALYSAAKNGHTDCVRLLLNAEARVDA), 766-795 (NGFTPLCVAAAQGHFECIELLTAYNANINH), 799-828 (GGQTPLYLACKTGNKECIKLLLEAGTDRSI), 832-861 (DGWTPIHAAVDTGNVDSLKLLMYHRVPAPG), and 901-931 (EGWTAAHIAASKGFKNCLEILCRHGGLEPER). Positions 1438 to 1471 (SAAWRKVNTSPRKKPGHFSSPMWNKPDLKHEGMR) are disordered. Ser-1510 bears the Phosphoserine mark. Positions 1527 to 1649 (KSESDISKIA…KHEHVEKRNK (123 aa)) are disordered. Positions 1528-1546 (SESDISKIADSREDLRTFD) are enriched in basic and acidic residues. Composition is skewed to polar residues over residues 1547–1557 (SSRTNPVTSAP), 1571–1584 (PLSSHQTTECSNSK), and 1621–1630 (NTRQLEINNN). Basic and acidic residues predominate over residues 1631–1649 (SKEENWNVDKHEHVEKRNK).

In terms of assembly, interacts with CTTN/cortactin SH3 domain. Interacts with STRN, STRN4/zinedin and MOB4/phocein; this interactions mediate the association with the STRIPAK core complex and may regulate dendritic spine distribution of the STRIPAK complex in hippocampal neurons. Activation of glutamate receptors weakens the interaction with STRN and STRN4.

Its subcellular location is the cytoplasm. The protein localises to the cell cortex. It is found in the cell projection. The protein resides in the dendritic spine. Regulates the dendritic spine distribution of CTTN/cortactin in hippocampal neurons, and thus controls dendritic spinogenesis and dendritic spine maintenance. Associates with the striatin-interacting phosphatase and kinase (STRIPAK) core complex to regulate dendritic spine distribution of the STRIPAK complex in hippocampal neurons. This Rattus norvegicus (Rat) protein is Cortactin-binding protein 2 (Cttnbp2).